The sequence spans 84 residues: UPF0297 protein NT01CX_2279 (84 aa).

This sequence belongs to the UPF0297 family.

The sequence is that of UPF0297 protein NT01CX_2279 from Clostridium novyi (strain NT).